Consider the following 353-residue polypeptide: Membrane lipoprotein TmpC (353 aa).

A signal peptide spans 1–20; it reads MREKWVRAFAGVFCAMLLIG. Cys-21 is lipidated: N-palmitoyl cysteine. Residue Cys-21 is the site of S-diacylglycerol cysteine attachment. Residue Asp-47 participates in guanosine binding. Asp-47 is a binding site for inosine. Adenosine is bound by residues 47–48 and Phe-56; that span reads DS. Guanosine is bound by residues Asn-57, Asp-128, Phe-206, Gly-232, Asp-258, and Lys-280. Inosine contacts are provided by Asn-57 and Asp-128. Adenosine contacts are provided by Asp-128, Phe-206, Gly-232, Asp-258, and Lys-280. Residues Gly-232, Asp-258, and Lys-280 each contribute to the inosine site.

Belongs to the BMP lipoprotein family. In terms of assembly, monomer.

Its subcellular location is the cell membrane. In terms of biological role, binds purine nucleosides and may play a role in purine nucleoside uptake. May be part of an ABC-type nucleoside uptake system. Has highest affinity for guanosine, followed by inosine and adenosine. Has very low affinity for cytidine and does not bind thymidine. This Treponema pallidum (strain Nichols) protein is Membrane lipoprotein TmpC (tmpC).